The following is a 251-amino-acid chain: Mycofactocin precursor peptide peptidase (251 aa).

Glu-38, His-40, Asp-49, His-128, and Glu-167 together coordinate a divalent metal cation.

The protein belongs to the creatininase superfamily. Homooctamer. The cofactor is Fe(2+). Requires Zn(2+) as cofactor.

It carries out the reaction [mycofactocin precursor peptide]-C-terminal glycyl-N-{5-[(4-hydroxyphenyl)methyl]-4,4-dimethyl-2-oxopyrrolidin-3-yl}acetamide + H2O = [mycofactocin precursor peptide]-C-terminal glycine + 3-amino-5-[(4-hydroxyphenyl)methyl]-4,4-dimethyl-2-pyrrolidin-2-one. In terms of biological role, peptidase involved in the biosynthesis of the enzyme cofactor mycofactocin (MFT). Catalyzes cleavage of the MftC-modified MftA peptide to liberate its final two residues, which consist of a cross-linked valine-decarboxylated tyrosine dipeptide (named 3-amino-5-[(4-hydroxyphenyl)methyl]-4,4-dimethyl-2-pyrrolidin-2-one or ADHP). This Mycobacterium tuberculosis (strain CDC 1551 / Oshkosh) protein is Mycofactocin precursor peptide peptidase (mftE).